An 88-amino-acid chain; its full sequence is MHLSLARSAVLMLLLLFALGNFVVVQSGLITRDVDNGQLTDNRRNLQTEWNPLSLFMSRRSCNNSCQSHSDCASHCICTFRGCGAVNG.

A signal peptide spans Met-1 to Ser-27. Positions Gly-28–Ser-58 are excised as a propeptide. 3 cysteine pairs are disulfide-bonded: Cys-62–Cys-76, Cys-66–Cys-78, and Cys-72–Cys-83. An Asparagine amide modification is found at Asn-87.

Belongs to the conotoxin P superfamily. As to expression, expressed by the venom duct.

It is found in the secreted. Its function is as follows. Neurotoxin. In vivo, elicits 'spasmodic' symptomatology. The sequence is that of Conotoxin Gm9.1 from Conus gloriamaris (Glory-of-the-Sea cone).